A 171-amino-acid polypeptide reads, in one-letter code: MKYTIVPAPRNLHDYVLELLEEWHPDCLDCEYPNGSPSPPTLHDLFDVELETSHPFVGLCDSCAEADTDSSASTEGDSGFSPLSTPPVSPIPPHPTSPASISDDMLLCLEEMPTFDDEDEVRSAATTFERWENTFDPHVGPIFGCLRCAFYQEQDDNALCGLCYPKGPCRR.

The segment at 40–48 is interaction with RB1 in competition with E2F1; the sequence is PTLHDLFDV. Residues 67–96 form a disordered region; the sequence is DTDSSASTEGDSGFSPLSTPPVSPIPPHPT. Residues 84–96 show a composition bias toward pro residues; sequence STPPVSPIPPHPT. The LXCXE motif, interaction with host RB1 motif lies at 106 to 110; sequence LLCLE. A zinc finger lies at 145-163; the sequence is CLRCAFYQEQDDNALCGLC. A Nuclear localization signal motif is present at residues 166 to 171; that stretch reads KGPCRR.

It belongs to the adenoviridae E1A protein family. Interacts with host UBE2I; this interaction interferes with polySUMOylation. Interacts with host RB1; this interaction induces the aberrant dissociation of RB1-E2F1 complex thereby disrupting the activity of RB1 and activating E2F1-regulated genes. Interacts with host ATF7; the interaction enhances ATF7-mediated viral transactivation activity which requires the zinc binding domains of both proteins. Isoform early E1A 32 kDa protein and isoform early E1A 26 kDa protein interact (via N-terminus) with CUL1 and E3 ubiquitin ligase RBX1; these interactions inhibit RBX1-CUL1-dependent elongation reaction of ubiquitin chains and attenuate ubiquitination of SCF(FBXW7) target proteins. Interacts (via PXLXP motif) with host ZMYND11/BS69 (via MYND-type zinc finger); this interaction inhibits E1A mediated transactivation. Interacts with host EP300; this interaction stimulates the acetylation of RB1 by recruiting EP300 and RB1 into a multimeric-protein complex. Interacts with host CTBP1 and CTBP2; this interaction seems to potentiate viral replication. Interacts with host DCAF7. Interacts with host DYRK1A. Interacts with host KPNA4; this interaction allows E1A import into the host nucleus. Interacts with host EP400; this interaction stabilizes MYC. Interacts with host TBP protein; this interaction probably disrupts the TBP-TATA complex.

The protein localises to the host nucleus. In terms of biological role, plays a role in viral genome replication by driving entry of quiescent cells into the cell cycle. Stimulation of progression from G1 to S phase allows the virus to efficiently use the cellular DNA replicating machinery to achieve viral genome replication. E1A protein has both transforming and trans-activating activities. Induces the disassembly of the E2F1 transcription factor from RB1 by direct competition for the same binding site on RB1, with subsequent transcriptional activation of E2F1-regulated S-phase genes and of the E2 region of the adenoviral genome. Release of E2F1 leads to the ARF-mediated inhibition of MDM2 and causes TP53/p53 to accumulate because it is not targeted for degradation by MDM2-mediated ubiquitination anymore. This increase in TP53, in turn, would arrest the cell proliferation and direct its death but this effect is counteracted by the viral protein E1B-55K. Inactivation of the ability of RB1 to arrest the cell cycle is critical for cellular transformation, uncontrolled cellular growth and proliferation induced by viral infection. Interaction with RBX1 and CUL1 inhibits ubiquitination of the proteins targeted by SCF(FBXW7) ubiquitin ligase complex, and may be linked to unregulated host cell proliferation. The tumorigenesis-restraining activity of E1A may be related to the disruption of the host CtBP-CtIP complex through the CtBP binding motif. This Canis lupus familiaris (Dog) protein is Early E1A protein.